The sequence spans 100 residues: Urease subunit gamma (100 aa).

This sequence belongs to the urease gamma subunit family. As to quaternary structure, heterotrimer of UreA (gamma), UreB (beta) and UreC (alpha) subunits. Three heterotrimers associate to form the active enzyme.

Its subcellular location is the cytoplasm. The enzyme catalyses urea + 2 H2O + H(+) = hydrogencarbonate + 2 NH4(+). It functions in the pathway nitrogen metabolism; urea degradation; CO(2) and NH(3) from urea (urease route): step 1/1. In Thermosynechococcus vestitus (strain NIES-2133 / IAM M-273 / BP-1), this protein is Urease subunit gamma.